Consider the following 236-residue polypeptide: Ubiquinone biosynthesis O-methyltransferase (236 aa).

S-adenosyl-L-methionine contacts are provided by Arg39, Gly59, Asp80, and Met124.

This sequence belongs to the methyltransferase superfamily. UbiG/COQ3 family.

The catalysed reaction is a 3-demethylubiquinol + S-adenosyl-L-methionine = a ubiquinol + S-adenosyl-L-homocysteine + H(+). It catalyses the reaction a 3-(all-trans-polyprenyl)benzene-1,2-diol + S-adenosyl-L-methionine = a 2-methoxy-6-(all-trans-polyprenyl)phenol + S-adenosyl-L-homocysteine + H(+). The protein operates within cofactor biosynthesis; ubiquinone biosynthesis. Its function is as follows. O-methyltransferase that catalyzes the 2 O-methylation steps in the ubiquinone biosynthetic pathway. The polypeptide is Ubiquinone biosynthesis O-methyltransferase (Shewanella sp. (strain ANA-3)).